The sequence spans 245 residues: Demethylmenaquinone methyltransferase (245 aa).

S-adenosyl-L-methionine is bound by residues threonine 69, aspartate 90, and 118 to 119; that span reads DC.

This sequence belongs to the class I-like SAM-binding methyltransferase superfamily. MenG/UbiE family.

It catalyses the reaction a 2-demethylmenaquinol + S-adenosyl-L-methionine = a menaquinol + S-adenosyl-L-homocysteine + H(+). It functions in the pathway quinol/quinone metabolism; menaquinone biosynthesis; menaquinol from 1,4-dihydroxy-2-naphthoate: step 2/2. Its function is as follows. Methyltransferase required for the conversion of demethylmenaquinol (DMKH2) to menaquinol (MKH2). This is Demethylmenaquinone methyltransferase from Porphyromonas gingivalis (strain ATCC 33277 / DSM 20709 / CIP 103683 / JCM 12257 / NCTC 11834 / 2561).